We begin with the raw amino-acid sequence, 453 residues long: Nuclear distribution protein PAC1 (453 aa).

Residues 19–51 (QKDELHKSILDYFKTNNLHESFATLMREANQEG) enclose the LisH domain. A coiled-coil region spans residues 69–96 (TSVIRLQKKIMEMESRISQLQEELSAAP). WD repeat units follow at residues 120–161 (GHRL…RTLK), 162–201 (GHTK…KNIK), 205–244 (GHDH…CTKT), 247–286 (GHAE…TKVE), 314–355 (LDPN…KTLT), 356–395 (GHDN…CTRT), and 413–452 (IEAP…KIWT).

This sequence belongs to the WD repeat LIS1/nudF family. Self-associates. Interacts with NDL1 and dynein.

Its subcellular location is the cytoplasm. It localises to the cytoskeleton. The protein resides in the spindle pole. Functionally, positively regulates the activity of the minus-end directed microtubule motor protein dynein. May enhance dynein-mediated microtubule sliding by targeting dynein to the microtubule plus end. Required for nuclear migration during vegetative growth as well as development. Required for localization of dynein to the mitotic spindle poles. Recruits additional proteins to the dynein complex at SPBs. Required for retrograde early endosome (EE) transport from the hyphal tip. The protein is Nuclear distribution protein PAC1 of Mycosarcoma maydis (Corn smut fungus).